The following is a 303-amino-acid chain: UDP-3-O-acyl-N-acetylglucosamine deacetylase (303 aa).

Residues H78, H237, and D241 each coordinate Zn(2+). The active-site Proton donor is H264.

Belongs to the LpxC family. Zn(2+) is required as a cofactor.

It carries out the reaction a UDP-3-O-[(3R)-3-hydroxyacyl]-N-acetyl-alpha-D-glucosamine + H2O = a UDP-3-O-[(3R)-3-hydroxyacyl]-alpha-D-glucosamine + acetate. The protein operates within glycolipid biosynthesis; lipid IV(A) biosynthesis; lipid IV(A) from (3R)-3-hydroxytetradecanoyl-[acyl-carrier-protein] and UDP-N-acetyl-alpha-D-glucosamine: step 2/6. In terms of biological role, catalyzes the hydrolysis of UDP-3-O-myristoyl-N-acetylglucosamine to form UDP-3-O-myristoylglucosamine and acetate, the committed step in lipid A biosynthesis. The polypeptide is UDP-3-O-acyl-N-acetylglucosamine deacetylase (Azotobacter vinelandii (strain DJ / ATCC BAA-1303)).